The chain runs to 230 residues: Cytidylate kinase (230 aa).

12–20 (GPSGAGKGT) is an ATP binding site.

This sequence belongs to the cytidylate kinase family. Type 1 subfamily.

It localises to the cytoplasm. It catalyses the reaction CMP + ATP = CDP + ADP. The catalysed reaction is dCMP + ATP = dCDP + ADP. The sequence is that of Cytidylate kinase from Aeromonas salmonicida (strain A449).